Consider the following 156-residue polypeptide: Small ribosomal subunit protein uS7 (156 aa).

Belongs to the universal ribosomal protein uS7 family. Part of the 30S ribosomal subunit. Contacts proteins S9 and S11.

Functionally, one of the primary rRNA binding proteins, it binds directly to 16S rRNA where it nucleates assembly of the head domain of the 30S subunit. Is located at the subunit interface close to the decoding center, probably blocks exit of the E-site tRNA. The polypeptide is Small ribosomal subunit protein uS7 (Rhizobium etli (strain ATCC 51251 / DSM 11541 / JCM 21823 / NBRC 15573 / CFN 42)).